The chain runs to 231 residues: Elongation factor 1-delta (231 aa).

Residues 75-136 (SGVTVEGNAP…AAAAAAKPAK (62 aa)) are disordered. The segment covering 101–117 (ADDDDDDDVDLFGEETE) has biased composition (acidic residues). Residues 118 to 127 (EEKKAAEERA) are compositionally biased toward basic and acidic residues.

It belongs to the EF-1-beta/EF-1-delta family. As to quaternary structure, EF-1 is composed of 4 subunits: alpha, beta (1B-alpha=beta'), delta (1B-beta), and gamma (1B-gamma).

Functionally, EF-1-beta and EF-1-beta' stimulate the exchange of GDP bound to EF-1-alpha to GTP. In Beta vulgaris (Sugar beet), this protein is Elongation factor 1-delta.